The sequence spans 276 residues: NAD kinase (276 aa).

Catalysis depends on Asp61, which acts as the Proton acceptor. NAD(+) is bound by residues 61 to 62, 134 to 135, Arg145, Lys162, Asp164, Val172, 175 to 180, and Gln234; these read DG, ND, and TAYSFS.

The protein belongs to the NAD kinase family. The cofactor is a divalent metal cation.

Its subcellular location is the cytoplasm. It carries out the reaction NAD(+) + ATP = ADP + NADP(+) + H(+). In terms of biological role, involved in the regulation of the intracellular balance of NAD and NADP, and is a key enzyme in the biosynthesis of NADP. Catalyzes specifically the phosphorylation on 2'-hydroxyl of the adenosine moiety of NAD to yield NADP. In Clostridium perfringens (strain ATCC 13124 / DSM 756 / JCM 1290 / NCIMB 6125 / NCTC 8237 / Type A), this protein is NAD kinase.